A 658-amino-acid polypeptide reads, in one-letter code: Probable Xaa-Pro aminopeptidase P (658 aa).

The Mn(2+) site is built by aspartate 449, aspartate 460, glutamate 558, and glutamate 572.

This sequence belongs to the peptidase M24B family. Mn(2+) is required as a cofactor.

The catalysed reaction is Release of any N-terminal amino acid, including proline, that is linked to proline, even from a dipeptide or tripeptide.. Catalyzes the removal of a penultimate prolyl residue from the N-termini of peptides. The protein is Probable Xaa-Pro aminopeptidase P (ampp) of Aspergillus clavatus (strain ATCC 1007 / CBS 513.65 / DSM 816 / NCTC 3887 / NRRL 1 / QM 1276 / 107).